The primary structure comprises 417 residues: L-rhamnose isomerase (417 aa).

The Mn(2+) site is built by His260, Asp292, and Asp294.

Belongs to the rhamnose isomerase family. Mn(2+) serves as cofactor.

The protein localises to the cytoplasm. It catalyses the reaction L-rhamnopyranose = L-rhamnulose. It participates in carbohydrate degradation; L-rhamnose degradation; glycerone phosphate from L-rhamnose: step 1/3. In terms of biological role, catalyzes the interconversion of L-rhamnose and L-rhamnulose. This is L-rhamnose isomerase from Mannheimia succiniciproducens (strain KCTC 0769BP / MBEL55E).